Consider the following 67-residue polypeptide: Large ribosomal subunit protein bL35 (67 aa).

This sequence belongs to the bacterial ribosomal protein bL35 family.

The sequence is that of Large ribosomal subunit protein bL35 from Bartonella tribocorum (strain CIP 105476 / IBS 506).